A 78-amino-acid chain; its full sequence is Acyl carrier protein (78 aa).

The Carrier domain maps to 2–77 (STIEERVKKI…AAIDYVNSHQ (76 aa)). Ser-37 is modified (O-(pantetheine 4'-phosphoryl)serine).

The protein belongs to the acyl carrier protein (ACP) family. In terms of processing, 4'-phosphopantetheine is transferred from CoA to a specific serine of apo-ACP by AcpS. This modification is essential for activity because fatty acids are bound in thioester linkage to the sulfhydryl of the prosthetic group.

The protein localises to the cytoplasm. It participates in lipid metabolism; fatty acid biosynthesis. In terms of biological role, carrier of the growing fatty acid chain in fatty acid biosynthesis. This chain is Acyl carrier protein, found in Pseudomonas putida (strain W619).